The chain runs to 549 residues: MAKDLRFNVEARRLLEAGVNALADAVKVTLGPKGRNAVIEKLTGPPTITNDGVTIAREIQLRNPFANMGAQLVKEVATKTNGTAGDGTTTATVLAQALVREGLHAVDGGANPMFLKNGIEAAVAALLEEFEKYRGEVEGEADLARVATLAANNDARIGDVVAAALGRVGCDGVVTVEESPIFGLEVSFVDGIELDNGYLSPYMVTDTERMEAAYTDPYILLTNEKISQVQTLMPVLELVTRAGGQLIVFAENVEGPALGMLVANNVHGTFRSAVVRAPGFGHRRLAELNDLAVFLGGQVITADAGLSLDRVTLGQLGRCKKATITEHATTIVDGAGSATEIHARIDQLKRELERAENPHDQDTLQTRIARLSGGVAVIRVGAVTGVELKEKLHRVEDSLAAARAALAEGVVAGGGTALLQAASALDKLTLTGDAAEGREIVRRAIAEPLRWIAINAGYDGDEVVKRVAELPRGHGFNAATGEYGEMAGFGVIDPVKVTRCALQSAASIAALLLTTETLVVEEVIGNPGAVIAPGFGDLAEGLVRPSNIA.

ATP is bound by residues T29–P32, D86–T90, G414, N477–A479, and D493.

It belongs to the chaperonin (HSP60) family. In terms of assembly, forms a cylinder of 14 subunits composed of two heptameric rings stacked back-to-back. Interacts with the co-chaperonin GroES.

It localises to the cytoplasm. The catalysed reaction is ATP + H2O + a folded polypeptide = ADP + phosphate + an unfolded polypeptide.. Together with its co-chaperonin GroES, plays an essential role in assisting protein folding. The GroEL-GroES system forms a nano-cage that allows encapsulation of the non-native substrate proteins and provides a physical environment optimized to promote and accelerate protein folding. This is Chaperonin GroEL 3 from Frankia casuarinae (strain DSM 45818 / CECT 9043 / HFP020203 / CcI3).